Here is a 1450-residue protein sequence, read N- to C-terminus: Protein clueless (1450 aa).

2 disordered regions span residues 1–126 and 266–287; these read MALE…PGSE and KTRP…VSEP. The span at 29 to 60 shows a compositional bias: low complexity; sequence NNSSAGKKQQQQQQPNQNQNLVNGNGNAADGP. Residues 62–71 are compositionally biased toward basic residues; sequence AKKKGKKNRN. Residue Ser271 is modified to Phosphoserine. The Clu domain maps to 425 to 667; the sequence is RAEDAFSSKL…RTFPPDVNFL (243 aa). 2 stretches are compositionally biased toward basic and acidic residues: residues 725–734 and 743–765; these read KQSEKTEEKA and KESS…EEKQ. 2 disordered regions span residues 725–775 and 959–1011; these read KQSE…TKTA and PAVS…SDWT. The span at 968 to 983 shows a compositional bias: basic residues; that stretch reads KKRSNGNKHNKHKSKG. Residues 984–1008 show a composition bias toward low complexity; sequence NKQQASGNQNGSSAGSSSGGSSSSS. TPR repeat units follow at residues 1102-1135, 1228-1261, and 1263-1296; these read AYNF…LNNV, ALID…NIKY, and GSKA…EKET. A disordered region spans residues 1410–1450; it reads NNNGDTEAETKDATKDNKDLAGASTQLTNGDKDAETAVASS. Basic and acidic residues predominate over residues 1417–1428; that stretch reads AETKDATKDNKD.

This sequence belongs to the CLU family.

Its subcellular location is the cytoplasm. MRNA-binding protein involved in proper cytoplasmic distribution of mitochondria. In Drosophila ananassae (Fruit fly), this protein is Protein clueless.